The sequence spans 849 residues: Mechanosensitive ion channel protein 7 (849 aa).

The disordered stretch occupies residues 1-49 (MEFRKPFKSHSSYKQIISTGDQNEKTKKKKKLANLDDGDIAKTQSSGSS). Positions 9 to 21 (SHSSYKQIISTGD) are enriched in polar residues. 6 consecutive transmembrane segments (helical) span residues 231-251 (AITL…VLSL), 274-294 (LVLI…VFFI), 313-333 (TAVQ…FLFD), 344-364 (VLLL…LWLI), 606-626 (MISF…LEIA), and 642-662 (AFMF…LFII).

The protein belongs to the MscS (TC 1.A.23) family.

The protein resides in the membrane. In terms of biological role, mechanosensitive channel that opens in response to stretch forces in the membrane lipid bilayer. This is Mechanosensitive ion channel protein 7 (MSL7) from Arabidopsis thaliana (Mouse-ear cress).